The chain runs to 508 residues: MFS-type transporter penM (508 aa).

Residues methionine 1–leucine 60 form a disordered region. Positions aspartate 35–asparagine 46 are enriched in basic and acidic residues. Asparagine 61 is a glycosylation site (N-linked (GlcNAc...) asparagine). Residues serine 73–glycine 93 form a helical membrane-spanning segment. An N-linked (GlcNAc...) asparagine glycan is attached at asparagine 100. Helical transmembrane passes span serine 108–leucine 128, isoleucine 143–valine 163, phenylalanine 166–methionine 186, alanine 197–leucine 217, tryptophan 225–isoleucine 245, and proline 299–phenylalanine 319. Residues lysine 293–tyrosine 307 carry the Peroxisomal targeting signal motif. The N-linked (GlcNAc...) asparagine glycan is linked to asparagine 331. 5 consecutive transmembrane segments (helical) span residues glycine 335–isoleucine 355, leucine 379–threonine 399, isoleucine 407–valine 427, phenylalanine 435–leucine 457, and serine 475–glycine 495.

The protein belongs to the major facilitator superfamily.

The protein resides in the peroxisome membrane. Its function is as follows. MFS-type transporter involved in penicillin production, most likely through the translocation of isopenicillin N from the cytosol to the peroxisomal lumen across the peroxisomal membrane. In Penicillium rubens (strain ATCC 28089 / DSM 1075 / NRRL 1951 / Wisconsin 54-1255) (Penicillium chrysogenum), this protein is MFS-type transporter penM.